A 143-amino-acid polypeptide reads, in one-letter code: Late embryogenesis abundant protein 1 (143 aa).

Over residues 1–17 (MSSQQNQNRQGEQQEQG) the composition is skewed to low complexity. The tract at residues 1 to 143 (MSSQQNQNRQ…QAGEKVKGRD (143 aa)) is disordered. Repeat copies occupy residues 47–57 (KTAEFRDSAGE), 69–79 (KGQEFKERAGE), 80–90 (KAEETKQRAGE), and 91–101 (KMDETKQRAGE). Basic and acidic residues-rich tracts occupy residues 47-60 (KTAE…ETIR) and 69-143 (KGQE…KGRD). Positions 47–101 (KTAEFRDSAGETIRDLTGQAQEKGQEFKERAGEKAEETKQRAGEKMDETKQRAGE) are 4 X 11 AA approximate repeats.

This sequence belongs to the LEA type 4 family.

May be involved in defense against water stress. This is Late embryogenesis abundant protein 1 from Aphelenchoides avenae (Mycophagous nematode worm).